The primary structure comprises 813 residues: Leucine--tRNA ligase (813 aa).

The 'HIGH' region signature appears at 39-49 (PYPSGRIHMGH). A 'KMSKS' region motif is present at residues 582–586 (KMSKS). K585 provides a ligand contact to ATP.

Belongs to the class-I aminoacyl-tRNA synthetase family.

It is found in the cytoplasm. It carries out the reaction tRNA(Leu) + L-leucine + ATP = L-leucyl-tRNA(Leu) + AMP + diphosphate. The protein is Leucine--tRNA ligase of Campylobacter hominis (strain ATCC BAA-381 / DSM 21671 / CCUG 45161 / LMG 19568 / NCTC 13146 / CH001A).